Reading from the N-terminus, the 423-residue chain is Putative competence-damage inducible protein (423 aa).

The protein belongs to the CinA family.

The polypeptide is Putative competence-damage inducible protein (Streptococcus equi subsp. zooepidemicus (strain MGCS10565)).